Consider the following 346-residue polypeptide: Putative cytochrome bd menaquinol oxidase subunit II (346 aa).

Transmembrane regions (helical) follow at residues 7–27, 63–83, 87–107, 119–139, 164–184, 201–221, 236–256, 269–289, and 312–332; these read ALIA…MATM, VFIV…TFVL, LLIP…FLVF, YISG…LPVT, AYSF…LLLA, KSAL…MVTM, FSWI…LFLP, LALV…GRAH, and ALFA…FFFW.

This sequence belongs to the cytochrome ubiquinol oxidase subunit 2 family.

The protein localises to the cell membrane. May have a role in sporulation. Can compensate for the loss of cytochrome aa3. This Bacillus subtilis (strain 168) protein is Putative cytochrome bd menaquinol oxidase subunit II (ythB).